The primary structure comprises 134 residues: Mini-ribonuclease 3 (134 aa).

The active site involves Asp-23.

This sequence belongs to the MrnC RNase family. In terms of assembly, homodimer. Mg(2+) serves as cofactor.

It is found in the cytoplasm. In terms of biological role, involved in correct processing of both the 5' and 3' ends of 23S rRNA precursor. Processes 30S rRNA precursor transcript even in absence of ribonuclease 3 (Rnc); Rnc processes 30S rRNA into smaller rRNA precursors. In Brevibacillus brevis (strain 47 / JCM 6285 / NBRC 100599), this protein is Mini-ribonuclease 3.